A 132-amino-acid polypeptide reads, in one-letter code: Large ribosomal subunit protein uL14 (132 aa).

Belongs to the universal ribosomal protein uL14 family. In terms of assembly, part of the 50S ribosomal subunit. Forms a cluster with proteins L3 and L24e, part of which may contact the 16S rRNA in 2 intersubunit bridges.

Functionally, binds to 23S rRNA. Forms part of two intersubunit bridges in the 70S ribosome. This is Large ribosomal subunit protein uL14 from Methanothrix thermoacetophila (strain DSM 6194 / JCM 14653 / NBRC 101360 / PT) (Methanosaeta thermophila).